Consider the following 212-residue polypeptide: ER lumen protein-retaining receptor 2 (212 aa).

Residues 1–4 (MNIF) lie on the Lumenal side of the membrane. A helical membrane pass occupies residues 5–24 (RLTGDLSHLAAIVILLLKIW). Residues 25-32 (KTRSCAGI) lie on the Cytoplasmic side of the membrane. Residues 33-52 (SGKSQLLFALVFTTRYLDLF) traverse the membrane as a helical segment. The segment at 47-48 (RY) is interaction with the K-D-E-L motif on target proteins. The Lumenal portion of the chain corresponds to 53-58 (TSFISL). A helical membrane pass occupies residues 59 to 79 (YNTSMKVIYLACSYATVYLIY). Residues 80 to 92 (LKFKATYDGNHDT) lie on the Cytoplasmic side of the membrane. A helical transmembrane segment spans residues 93-110 (FRVEFLVVPVGGLSFLVN). The Lumenal segment spans residues 111-116 (HDFSPL). The helical transmembrane segment at 117–135 (EILWTFSIYLESVAILPQL) threads the bilayer. The Cytoplasmic segment spans residues 136–149 (FMISKTGEAETITT). The chain crosses the membrane as a helical span at residues 150 to 168 (HYLFFLGLYRALYLVNWIW). The segment at 159–169 (RALYLVNWIWR) is interaction with the K-D-E-L motif on target proteins. Residues 169–178 (RFYFEGFFDL) are Lumenal-facing. The helical transmembrane segment at 179–199 (IAVVAGVVQTILYCDFFYLYI) threads the bilayer. Over 200-212 (TKVLKGKKLSLPA) the chain is Cytoplasmic. An important for recycling of cargo proteins with the sequence motif K-D-E-L from the Golgi to the endoplasmic reticulum region spans residues 204 to 207 (KGKK).

It belongs to the ERD2 family.

It is found in the endoplasmic reticulum membrane. It localises to the golgi apparatus membrane. The protein localises to the cytoplasmic vesicle. The protein resides in the COPI-coated vesicle membrane. Membrane receptor that binds the K-D-E-L sequence motif in the C-terminal part of endoplasmic reticulum resident proteins and maintains their localization in that compartment by participating to their vesicle-mediated recycling back from the Golgi. Binding is pH dependent, and is optimal at pH 5-5.4. In Homo sapiens (Human), this protein is ER lumen protein-retaining receptor 2 (KDELR2).